The following is a 417-amino-acid chain: Frizzy aggregation protein FrzCD (417 aa).

Residues 1-11 are compositionally biased toward basic and acidic residues; the sequence is MSLDTPNEKPA. Positions 1 to 34 are disordered; it reads MSLDTPNEKPAGKARARKAPASKAGATNAASTSS. Residues 21-34 show a composition bias toward low complexity; it reads ASKAGATNAASTSS. The region spanning 144–380 is the Methyl-accepting transducer domain; the sequence is AALRLSSSAN…QVVASMAEIE (237 aa).

It belongs to the methyl-accepting chemotaxis (MCP) protein family. Methylated. Saturated fatty acids capric acid and lauric acid stimulate methylation. Short-chain alcohols, such as isoamyl alcohol, and some other solvents cause demethylation.

It is found in the cytoplasm. Functionally, methyl-accepting taxis protein necessary for the proper aggregation of cells to form fruiting bodies. Frz genes define a system of signal transduction analogous to the enterobacterial chemotaxis systems. This is Frizzy aggregation protein FrzCD (frzCD) from Myxococcus xanthus.